Reading from the N-terminus, the 137-residue chain is S-adenosylmethionine decarboxylase proenzyme (137 aa).

Serine 63 serves as the catalytic Schiff-base intermediate with substrate; via pyruvic acid. The residue at position 63 (serine 63) is a Pyruvic acid (Ser); by autocatalysis. The Proton acceptor; for processing activity role is filled by histidine 68. Residue cysteine 83 is the Proton donor; for catalytic activity of the active site.

This sequence belongs to the prokaryotic AdoMetDC family. Type 1 subfamily. Heterotetramer of two alpha and two beta chains arranged as a dimer of alpha/beta heterodimers. The cofactor is pyruvate. In terms of processing, is synthesized initially as an inactive proenzyme. Formation of the active enzyme involves a self-maturation process in which the active site pyruvoyl group is generated from an internal serine residue via an autocatalytic post-translational modification. Two non-identical subunits are generated from the proenzyme in this reaction, and the pyruvate is formed at the N-terminus of the alpha chain, which is derived from the carboxyl end of the proenzyme. The post-translation cleavage follows an unusual pathway, termed non-hydrolytic serinolysis, in which the side chain hydroxyl group of the serine supplies its oxygen atom to form the C-terminus of the beta chain, while the remainder of the serine residue undergoes an oxidative deamination to produce ammonia and the pyruvoyl group blocking the N-terminus of the alpha chain.

The catalysed reaction is S-adenosyl-L-methionine + H(+) = S-adenosyl 3-(methylsulfanyl)propylamine + CO2. Its pathway is amine and polyamine biosynthesis; S-adenosylmethioninamine biosynthesis; S-adenosylmethioninamine from S-adenosyl-L-methionine: step 1/1. Catalyzes the decarboxylation of S-adenosylmethionine to S-adenosylmethioninamine (dcAdoMet), the propylamine donor required for the synthesis of the polyamines spermine and spermidine from the diamine putrescine. The protein is S-adenosylmethionine decarboxylase proenzyme of Fervidobacterium nodosum (strain ATCC 35602 / DSM 5306 / Rt17-B1).